Reading from the N-terminus, the 359-residue chain is Protein RecA (359 aa).

64 to 71 (GHESSGKT) contacts ATP. The segment at 329–359 (KYSNKDSNDSPKEGSKIKTKVNPAVTQDELI) is disordered. Positions 331 to 344 (SNKDSNDSPKEGSK) are enriched in basic and acidic residues.

Belongs to the RecA family.

Its subcellular location is the cytoplasm. Functionally, can catalyze the hydrolysis of ATP in the presence of single-stranded DNA, the ATP-dependent uptake of single-stranded DNA by duplex DNA, and the ATP-dependent hybridization of homologous single-stranded DNAs. It interacts with LexA causing its activation and leading to its autocatalytic cleavage. This Francisella tularensis subsp. tularensis (strain FSC 198) protein is Protein RecA.